Reading from the N-terminus, the 142-residue chain is Nucleoside diphosphate kinase (142 aa).

The ATP site is built by K9, F57, R85, T91, R102, and N112. H115 acts as the Pros-phosphohistidine intermediate in catalysis.

This sequence belongs to the NDK family. As to quaternary structure, homotetramer. The cofactor is Mg(2+).

Its subcellular location is the cytoplasm. The enzyme catalyses a 2'-deoxyribonucleoside 5'-diphosphate + ATP = a 2'-deoxyribonucleoside 5'-triphosphate + ADP. It carries out the reaction a ribonucleoside 5'-diphosphate + ATP = a ribonucleoside 5'-triphosphate + ADP. Functionally, major role in the synthesis of nucleoside triphosphates other than ATP. The ATP gamma phosphate is transferred to the NDP beta phosphate via a ping-pong mechanism, using a phosphorylated active-site intermediate. The sequence is that of Nucleoside diphosphate kinase from Dehalococcoides mccartyi (strain CBDB1).